Here is a 389-residue protein sequence, read N- to C-terminus: Major outer membrane porin (389 aa).

Positions 1–23 (MKKLLKSALLSAAFAGSVGSLQA) are cleaved as a signal peptide.

It belongs to the chlamydial porin (CP) (TC 1.B.2) family. As to quaternary structure, part of a disulfide cross-linked outer membrane complex (COMC) composed of the major outer membrane porin (MOMP), the small cysteine-rich protein (OmcA) and the large cysteine-rich periplasmic protein (OmcB).

Its subcellular location is the cell outer membrane. Functionally, in elementary bodies (EBs, the infectious stage, which is able to survive outside the host cell) provides the structural integrity of the outer envelope through disulfide cross-links with the small cysteine-rich protein and the large cysteine-rich periplasmic protein. It has been described in publications as the Sarkosyl-insoluble COMC (Chlamydia outer membrane complex), and serves as the functional equivalent of peptidoglycan. Permits diffusion of specific solutes through the outer membrane. The polypeptide is Major outer membrane porin (ompA) (Chlamydia pneumoniae (Chlamydophila pneumoniae)).